We begin with the raw amino-acid sequence, 61 residues long: Putative antitoxin APE_0472b.1 (61 aa).

This sequence belongs to the UPF0165 family.

Functionally, possibly the antitoxin component of a type II toxin-antitoxin (TA) system. The protein is Putative antitoxin APE_0472b.1 of Aeropyrum pernix (strain ATCC 700893 / DSM 11879 / JCM 9820 / NBRC 100138 / K1).